A 316-amino-acid chain; its full sequence is Acetaldehyde dehydrogenase (316 aa).

Position 11–14 (11–14 (SGNI)) interacts with NAD(+). Cys131 (acyl-thioester intermediate) is an active-site residue. Residues 162–170 (SAGPGTRAN) and Asn289 each bind NAD(+).

The protein belongs to the acetaldehyde dehydrogenase family. Interacts with MhpE.

It catalyses the reaction acetaldehyde + NAD(+) + CoA = acetyl-CoA + NADH + H(+). It functions in the pathway aromatic compound metabolism; 3-phenylpropanoate degradation. Its function is as follows. Catalyzes the conversion of acetaldehyde to acetyl-CoA, using NAD(+) and coenzyme A. Is the final enzyme in the meta-cleavage pathway for the degradation of aromatic compounds. The polypeptide is Acetaldehyde dehydrogenase (Shigella sonnei (strain Ss046)).